Reading from the N-terminus, the 396-residue chain is Tryptophan synthase beta chain (396 aa).

At Lys-86 the chain carries N6-(pyridoxal phosphate)lysine.

Belongs to the TrpB family. In terms of assembly, tetramer of two alpha and two beta chains. Pyridoxal 5'-phosphate serves as cofactor.

It catalyses the reaction (1S,2R)-1-C-(indol-3-yl)glycerol 3-phosphate + L-serine = D-glyceraldehyde 3-phosphate + L-tryptophan + H2O. Its pathway is amino-acid biosynthesis; L-tryptophan biosynthesis; L-tryptophan from chorismate: step 5/5. In terms of biological role, the beta subunit is responsible for the synthesis of L-tryptophan from indole and L-serine. The chain is Tryptophan synthase beta chain from Francisella tularensis subsp. novicida (strain U112).